We begin with the raw amino-acid sequence, 420 residues long: E3 ubiquitin protein ligase DRIP2 (420 aa).

An RING-type zinc finger spans residues 20-61; sequence CPLCDKLLRDATTISECLHTFCRKCIYEKITEDEIESCPVCD. A compositionally biased stretch (polar residues) spans 113–123; sequence ISSLVVSTPRV. 2 disordered regions span residues 113-201 and 226-289; these read ISSL…KDVD and DPKS…TFGD. The segment covering 154–165 has biased composition (basic and acidic residues); that stretch reads KKEEEFGDDHVE. 2 stretches are compositionally biased toward polar residues: residues 166-194 and 232-242; these read SASSPETLKKFTQNKRQSSYANPNQSLSN and GNASHNDVQGS. A compositionally biased stretch (basic residues) spans 244 to 253; that stretch reads TKTKDHKRKC. Residues 260 to 273 show a composition bias toward polar residues; sequence SNNGDPTTSETATL. Basic residues predominate over residues 274-284; that stretch reads KRTRRTRRKRS.

In terms of assembly, interacts with DREB2A. Post-translationally, auto-ubiquitinated. Expressed in roots, leaves and flowers.

The enzyme catalyses S-ubiquitinyl-[E2 ubiquitin-conjugating enzyme]-L-cysteine + [acceptor protein]-L-lysine = [E2 ubiquitin-conjugating enzyme]-L-cysteine + N(6)-ubiquitinyl-[acceptor protein]-L-lysine.. It functions in the pathway protein modification; protein ubiquitination. Its function is as follows. E3 ubiquitin-protein ligase that acts as a negative regulator of the response to water stress. Mediates ubiquitination and subsequent proteasomal degradation of the drought-induced transcriptional activator DREB2A. Functionally redundant with DRIP1. The sequence is that of E3 ubiquitin protein ligase DRIP2 (DRIP2) from Arabidopsis thaliana (Mouse-ear cress).